Consider the following 900-residue polypeptide: uncharacterized protein (900 aa).

Residues Met-1 to Arg-16 are compositionally biased toward basic and acidic residues. Disordered stretches follow at residues Met-1–Ser-84, Asn-103–Ser-160, Asn-512–Gly-556, Leu-568–Asn-613, and Lys-648–Pro-676. The segment covering Gly-17 to Ser-27 has biased composition (polar residues). Residues Lys-30 to Arg-58 show a composition bias toward basic and acidic residues. Composition is skewed to low complexity over residues Gln-63–Ser-76 and Asn-103–Lys-127. Ser-105 carries the post-translational modification Phosphoserine. A compositionally biased stretch (basic residues) spans Gly-129–Arg-143. The segment covering Ser-528–Ser-537 has biased composition (low complexity). Positions Lys-543–Lys-553 are enriched in basic residues. Low complexity-rich tracts occupy residues Ser-570–Pro-601 and Ser-665–Pro-676.

This is an uncharacterized protein from Saccharomyces cerevisiae (strain ATCC 204508 / S288c) (Baker's yeast).